The chain runs to 92 residues: Kinetoplastid membrane protein 11C (92 aa).

The protein belongs to the KMP-11 family. In terms of assembly, monomer.

It is found in the cytoplasm. Its subcellular location is the cytoskeleton. The protein resides in the cell projection. The protein localises to the cilium. It localises to the flagellum. Its function is as follows. May be involved in the regulation of the cytoskeleton through interaction with the subpellicular microtubules. May be involved in parasite mobility and attachment to the surface of the host cell. Behaves as a strong immunogen during infection. This chain is Kinetoplastid membrane protein 11C (KMP-11C), found in Leishmania infantum.